The primary structure comprises 332 residues: MPNSTSQVTKLKSKNNEFSYTADAVSIYLHKIGRVPLLSHEQEIFFAQQVQQMMVMFTAKEELAEKLQREPTLQEWADKMQLKEDVLLQQLSQGQIAKQKMIQANLRLVVSIAKKYQKRNLEFLDLIQEGALGLERGVEKFDPTLGYKFSTYAYWWIRQGITRAIAQQSRTIRLPIHMADKLNKIKCVQRELSQKLGYIAGVTEIAQALNLEPSQIREYLQLVRQPVSLDMRIGFEQDTQLQDLLKDDGMSPERYAERELLYQDIHNLLAKLTPQQKEVLILRFGLAGGCELTLVQISQRMGISRERVRQVEKQALTLLRRYGIDSRSYLAD.

A Polymerase core binding motif is present at residues 125–138; that stretch reads DLIQEGALGLERGV. A DNA-binding region (H-T-H motif) is located at residues 294–313; the sequence is LVQISQRMGISRERVRQVEK.

It belongs to the sigma-70 factor family.

In terms of biological role, sigma factors are initiation factors that promote the attachment of RNA polymerase to specific initiation sites and are then released. The sequence is that of RNA polymerase sigma-B factor (sigB) from Nostoc sp. (strain PCC 7120 / SAG 25.82 / UTEX 2576).